A 388-amino-acid chain; its full sequence is Succinate--CoA ligase [ADP-forming] subunit beta (388 aa).

An ATP-grasp domain is found at 9 to 244 (KQLFAEYGLP…PSQDDPREAH (236 aa)). ATP is bound by residues Lys46, 53–55 (GRG), Glu99, Thr102, and Glu107. 2 residues coordinate Mg(2+): Asn199 and Asp213. Substrate is bound by residues Asn264 and 321–323 (GIV).

Belongs to the succinate/malate CoA ligase beta subunit family. In terms of assembly, heterotetramer of two alpha and two beta subunits. It depends on Mg(2+) as a cofactor.

The enzyme catalyses succinate + ATP + CoA = succinyl-CoA + ADP + phosphate. It catalyses the reaction GTP + succinate + CoA = succinyl-CoA + GDP + phosphate. The protein operates within carbohydrate metabolism; tricarboxylic acid cycle; succinate from succinyl-CoA (ligase route): step 1/1. Succinyl-CoA synthetase functions in the citric acid cycle (TCA), coupling the hydrolysis of succinyl-CoA to the synthesis of either ATP or GTP and thus represents the only step of substrate-level phosphorylation in the TCA. The beta subunit provides nucleotide specificity of the enzyme and binds the substrate succinate, while the binding sites for coenzyme A and phosphate are found in the alpha subunit. This Pseudomonas fluorescens (strain ATCC BAA-477 / NRRL B-23932 / Pf-5) protein is Succinate--CoA ligase [ADP-forming] subunit beta.